Here is a 342-residue protein sequence, read N- to C-terminus: S-adenosylmethionine:tRNA ribosyltransferase-isomerase (342 aa).

The protein belongs to the QueA family. Monomer.

Its subcellular location is the cytoplasm. It carries out the reaction 7-aminomethyl-7-carbaguanosine(34) in tRNA + S-adenosyl-L-methionine = epoxyqueuosine(34) in tRNA + adenine + L-methionine + 2 H(+). The protein operates within tRNA modification; tRNA-queuosine biosynthesis. Its function is as follows. Transfers and isomerizes the ribose moiety from AdoMet to the 7-aminomethyl group of 7-deazaguanine (preQ1-tRNA) to give epoxyqueuosine (oQ-tRNA). The polypeptide is S-adenosylmethionine:tRNA ribosyltransferase-isomerase (Streptococcus agalactiae serotype V (strain ATCC BAA-611 / 2603 V/R)).